The chain runs to 375 residues: POU domain, class 3, transcription factor 1-A (375 aa).

Disordered stretches follow at residues 1–29 (MAAT…RMHQ), 67–138 (PASD…HQPL), and 151–200 (MLGP…PSSD). 3 stretches are compositionally biased toward polar residues: residues 107 to 117 (VHQQSPSSHAW), 129 to 138 (SPSSNSHQPL), and 151 to 160 (MLGPQASSLH). Residues 162 to 177 (SMRDPLHDDPGVHDTQ) are compositionally biased toward basic and acidic residues. The 75-residue stretch at 194–268 (EDAPSSDDLE…LLNKWLEETD (75 aa)) folds into the POU-specific domain. Residues 286-345 (KRKKRTSIEVGVKGALENHFLKCPKPSAHEITSLADSLQLEKEVVRVWFCNRRQKEKRMT) constitute a DNA-binding region (homeobox).

The protein belongs to the POU transcription factor family. Class-3 subfamily. In terms of tissue distribution, in embryos at the neural fold stage, localized primarily in the anterior neural plate, and localized mostly in the anterior region of the nerve cord of neurula stage embryos. In tailbud stages, expressed predominantly in the eye and brain, with weak expression along the length of the nerve cord. In adults, expressed in skin and brain.

The protein resides in the nucleus. Functionally, acts as a transcription factor. May play a role in neuronal differentiation. The chain is POU domain, class 3, transcription factor 1-A (pou3f1-a) from Xenopus laevis (African clawed frog).